Here is a 318-residue protein sequence, read N- to C-terminus: tRNA U34 carboxymethyltransferase (318 aa).

Carboxy-S-adenosyl-L-methionine contacts are provided by Lys88, Trp102, Lys107, Gly126, Met192, Tyr196, and Arg311.

This sequence belongs to the class I-like SAM-binding methyltransferase superfamily. CmoB family. Homotetramer.

It catalyses the reaction carboxy-S-adenosyl-L-methionine + 5-hydroxyuridine(34) in tRNA = 5-carboxymethoxyuridine(34) in tRNA + S-adenosyl-L-homocysteine + H(+). Its function is as follows. Catalyzes carboxymethyl transfer from carboxy-S-adenosyl-L-methionine (Cx-SAM) to 5-hydroxyuridine (ho5U) to form 5-carboxymethoxyuridine (cmo5U) at position 34 in tRNAs. The polypeptide is tRNA U34 carboxymethyltransferase (Pseudomonas fluorescens (strain Pf0-1)).